Here is a 324-residue protein sequence, read N- to C-terminus: UDP-N-acetylenolpyruvoylglucosamine reductase (324 aa).

The FAD-binding PCMH-type domain occupies 38–217; that stretch reads AGGLAELMFQ…IRAEMDAVRQ (180 aa). Residue R183 is part of the active site. The Proton donor role is filled by S232. E302 is an active-site residue.

Belongs to the MurB family. The cofactor is FAD.

It is found in the cytoplasm. The enzyme catalyses UDP-N-acetyl-alpha-D-muramate + NADP(+) = UDP-N-acetyl-3-O-(1-carboxyvinyl)-alpha-D-glucosamine + NADPH + H(+). Its pathway is cell wall biogenesis; peptidoglycan biosynthesis. Its function is as follows. Cell wall formation. The polypeptide is UDP-N-acetylenolpyruvoylglucosamine reductase (Allorhizobium ampelinum (strain ATCC BAA-846 / DSM 112012 / S4) (Agrobacterium vitis (strain S4))).